The following is a 316-amino-acid chain: Protease HtpX homolog (316 aa).

Residues 16–36 (LFMGAGFLIGGATGMMIALVF) form a helical membrane-spanning segment. Zn(2+) is bound at residue H134. E135 is a catalytic residue. H138 is a Zn(2+) binding site. The next 2 helical transmembrane spans lie at 149-169 (VTATIAGAISALANFAFFFGG) and 180-200 (LGGMIGAILIAILAPIAAMLV). E209 provides a ligand contact to Zn(2+). The tract at residues 295 to 316 (PVMAATTSSSVPLSGERGGPWS) is disordered.

The protein belongs to the peptidase M48B family. Zn(2+) is required as a cofactor.

The protein resides in the cell inner membrane. This Caulobacter vibrioides (strain ATCC 19089 / CIP 103742 / CB 15) (Caulobacter crescentus) protein is Protease HtpX homolog.